The primary structure comprises 1302 residues: Regulator of telomere elongation helicase 1 (1302 aa).

One can recognise a Helicase ATP-binding domain in the interval 7 to 297 (NGVTVDFPFQ…TKTAQQGEPH (291 aa)). 42–49 (SHTGTGKT) serves as a coordination point for ATP. [4Fe-4S] cluster-binding residues include cysteine 146, cysteine 164, cysteine 173, and cysteine 208. A Nuclear localization signal motif is present at residues 152–168 (KKQESNHIQIHLCRKKV). The DEAH box motif lies at 251 to 254 (DEAH). Positions 758-767 (PAPAPRATAP) are enriched in low complexity. The disordered stretch occupies residues 758 to 819 (PAPAPRATAP…AAGDPESSLC (62 aa)). Over residues 770-780 (REGEDAVREVK) the composition is skewed to basic and acidic residues. The short motif at 873–879 (PRGGRKK) is the Nuclear localization signal element. Disordered stretches follow at residues 981 to 1006 (RPEHSIPRRQPAQPVLDPTGRTAPDP), 1019 to 1058 (DPREHLNQGRPHLSPRPPPTGDPGSHPQWRSGVPRAGKQG), 1134 to 1153 (CTDLTGRPYPGMERPGPQEE), and 1160 to 1234 (VLTH…QAAG). The span at 1178 to 1187 (KTQSKISSLL) shows a compositional bias: polar residues. The PIP-box signature appears at 1180-1187 (QSKISSLL).

The protein belongs to the helicase family. RAD3/XPD subfamily. As to quaternary structure, interacts with TERF1. Interacts (via PIP-box) with PCNA; the interaction is direct and essential for suppressing telomere fragility. Interacts with MMS19; the interaction mediates the association of RTEL1 with the cytosolic iron-sulfur protein assembly (CIA) complex.

It is found in the nucleus. The catalysed reaction is ATP + H2O = ADP + phosphate + H(+). In terms of biological role, a probable ATP-dependent DNA helicase implicated in telomere-length regulation, DNA repair and the maintenance of genomic stability. Acts as an anti-recombinase to counteract toxic recombination and limit crossover during meiosis. Regulates meiotic recombination and crossover homeostasis by physically dissociating strand invasion events and thereby promotes noncrossover repair by meiotic synthesis dependent strand annealing (SDSA) as well as disassembly of D loop recombination intermediates. Also disassembles T loops and prevents telomere fragility by counteracting telomeric G4-DNA structures, which together ensure the dynamics and stability of the telomere. The chain is Regulator of telomere elongation helicase 1 from Pongo abelii (Sumatran orangutan).